Here is a 312-residue protein sequence, read N- to C-terminus: Regulation of nuclear pre-mRNA domain-containing protein 1A (312 aa).

N-acetylserine is present on Ser2. Residues 2 to 133 (SAFSEAALEK…QLKHALYGDK (132 aa)) enclose the CID domain. Residues Ser153, Ser156, and Ser285 each carry the phosphoserine modification. Residues 244 to 286 (LADFLRCQKEALAEKEHKLEEYKRKLARVSLVRKELRARIQSL) are a coiled coil.

It belongs to the UPF0400 (RTT103) family. In terms of assembly, may form a heterodimer with RPRD1B. Associates with the RNA polymerase II subunit POLR2A (via CTD phosphorylated at 'Ser-2' and 'Ser-7' of the heptad repeats).

It is found in the nucleus. Interacts with phosphorylated C-terminal heptapeptide repeat domain (CTD) of the largest RNA polymerase II subunit POLR2A, and participates in dephosphorylation of the CTD by RPAP2. May act as a negative regulator of cyclin-D1 (CCND1) and cyclin-E (CCNE1) in the cell cycle. This Mus musculus (Mouse) protein is Regulation of nuclear pre-mRNA domain-containing protein 1A (Rprd1a).